A 527-amino-acid polypeptide reads, in one-letter code: Bifunctional dihydrofolate reductase-thymidylate synthase (527 aa).

One can recognise a DHFR domain in the interval 28-238; sequence PFSVVVASDE…KKYQFEKLVP (211 aa). Substrate is bound at residue Val-32. NADP(+)-binding positions include Ala-34 and 40 to 46; that span reads GIGDGGT. Asp-54 lines the substrate pocket. Residues 84-86 and 105-108 each bind NADP(+); these read RKT and LSRS. The substrate site is built by Ile-160, Tyr-166, and Thr-184. An NADP(+)-binding site is contributed by 161–168; that stretch reads GGGTIYKQ. The thymidylate synthase stretch occupies residues 243-527; sequence EEQYLNLVGR…YPVISMEMAV (285 aa). Arg-263 is a binding site for dUMP. Cys-409 is an active-site residue. Residues His-410, 428–432, Asn-440, and 470–472 each bind dUMP; these read QRSCD and HVY.

This sequence in the N-terminal section; belongs to the dihydrofolate reductase family. It in the C-terminal section; belongs to the thymidylate synthase family. As to quaternary structure, homodimer.

The catalysed reaction is dUMP + (6R)-5,10-methylene-5,6,7,8-tetrahydrofolate = 7,8-dihydrofolate + dTMP. It catalyses the reaction (6S)-5,6,7,8-tetrahydrofolate + NADP(+) = 7,8-dihydrofolate + NADPH + H(+). Its pathway is pyrimidine metabolism; dTTP biosynthesis. The protein operates within cofactor biosynthesis; tetrahydrofolate biosynthesis; 5,6,7,8-tetrahydrofolate from 7,8-dihydrofolate: step 1/1. Its function is as follows. Bifunctional enzyme. Involved in de novo dTMP biosynthesis. Key enzyme in folate metabolism. Catalyzes an essential reaction for de novo glycine and purine synthesis, DNA precursor synthesis, and for the conversion of dUMP to dTMP. In Trypanosoma brucei brucei, this protein is Bifunctional dihydrofolate reductase-thymidylate synthase.